Reading from the N-terminus, the 153-residue chain is Putative phosphatidylglycerol/phosphatidylinositol transfer protein DDB_G0285639 (153 aa).

An N-terminal signal peptide occupies residues 1–21; that stretch reads MIIKILLLIISISLFLNISIG. N-linked (GlcNAc...) asparagine glycans are attached at residues asparagine 17, asparagine 61, asparagine 87, asparagine 117, and asparagine 140.

The protein belongs to the NPC2 family. Monomer.

Catalyzes the intermembrane transfer of phosphatidylglycerol and phosphatidylinositol. The sequence is that of Putative phosphatidylglycerol/phosphatidylinositol transfer protein DDB_G0285639 from Dictyostelium discoideum (Social amoeba).